Reading from the N-terminus, the 416-residue chain is Serine hydroxymethyltransferase (416 aa).

(6S)-5,6,7,8-tetrahydrofolate contacts are provided by residues Leu119 and 123 to 125; that span reads GHL. Lys228 is subject to N6-(pyridoxal phosphate)lysine. Glu243 contacts (6S)-5,6,7,8-tetrahydrofolate.

Belongs to the SHMT family. In terms of assembly, homodimer. It depends on pyridoxal 5'-phosphate as a cofactor.

The protein localises to the cytoplasm. The enzyme catalyses (6R)-5,10-methylene-5,6,7,8-tetrahydrofolate + glycine + H2O = (6S)-5,6,7,8-tetrahydrofolate + L-serine. Its pathway is one-carbon metabolism; tetrahydrofolate interconversion. It participates in amino-acid biosynthesis; glycine biosynthesis; glycine from L-serine: step 1/1. Functionally, catalyzes the reversible interconversion of serine and glycine with tetrahydrofolate (THF) serving as the one-carbon carrier. This reaction serves as the major source of one-carbon groups required for the biosynthesis of purines, thymidylate, methionine, and other important biomolecules. Also exhibits THF-independent aldolase activity toward beta-hydroxyamino acids, producing glycine and aldehydes, via a retro-aldol mechanism. The polypeptide is Serine hydroxymethyltransferase (Desulforapulum autotrophicum (strain ATCC 43914 / DSM 3382 / VKM B-1955 / HRM2) (Desulfobacterium autotrophicum)).